A 148-amino-acid chain; its full sequence is C-C motif chemokine 2 (148 aa).

The first 23 residues, 1-23 (MQVPVMLLGLLFTVAGWSIHVLA), serve as a signal peptide directing secretion. Pyrrolidone carboxylic acid is present on glutamine 24. Disulfide bonds link cysteine 34-cysteine 59 and cysteine 35-cysteine 75. Asparagine 126 carries an N-linked (GlcNAc...) asparagine glycan.

The protein belongs to the intercrine beta (chemokine CC) family. Monomer or homodimer; in equilibrium. Is tethered on endothelial cells by glycosaminoglycan (GAG) side chains of proteoglycans. Interacts with TNFAIP6 (via Link domain). Post-translationally, processing at the N-terminus can regulate receptor and target cell selectivity. Deletion of the N-terminal residue converts it from an activator of basophil to an eosinophil chemoattractant. N-Glycosylated.

Its subcellular location is the secreted. Functionally, acts as a ligand for C-C chemokine receptor CCR2. Signals through binding and activation of CCR2 and induces a strong chemotactic response and mobilization of intracellular calcium ions. Exhibits a chemotactic activity for monocytes and basophils but not neutrophils or eosinophils. Plays an important role in mediating peripheral nerve injury-induced neuropathic pain. Increases NMDA-mediated synaptic transmission in both dopamine D1 and D2 receptor-containing neurons, which may be caused by MAPK/ERK-dependent phosphorylation of GRIN2B/NMDAR2B. The chain is C-C motif chemokine 2 (Ccl2) from Mus musculus (Mouse).